Consider the following 437-residue polypeptide: Protein disulfide-isomerase tmx3a (437 aa).

The signal sequence occupies residues 1 to 21; that stretch reads MANMRNIILTALLSAIALVSG. The Thioredoxin domain occupies 22–126; sequence YVEGLDDKFT…IIEFTNRVSG (105 aa). Over 22 to 368 the chain is Extracellular; it reads YVEGLDDKFT…KNTVMSMVET (347 aa). Residues cysteine 48 and cysteine 51 each act as nucleophile in the active site. Cysteine 48 and cysteine 51 are joined by a disulfide. A glycan (N-linked (GlcNAc...) asparagine) is linked at asparagine 308. Residues 369 to 389 form a helical membrane-spanning segment; that stretch reads APVFSCFVLGLPVGVVVLVIY. Residues 390–437 lie on the Cytoplasmic side of the membrane; sequence ATCTAVPADDEKPEEEATASPALDTHGKKAIESQPESTEKTSEAKKED. Positions 398 to 437 are disordered; it reads DDEKPEEEATASPALDTHGKKAIESQPESTEKTSEAKKED. Residues 414-437 are compositionally biased toward basic and acidic residues; the sequence is THGKKAIESQPESTEKTSEAKKED. The short motif at 434–437 is the Di-lysine motif element; that stretch reads KKED.

Its subcellular location is the endoplasmic reticulum membrane. The enzyme catalyses Catalyzes the rearrangement of -S-S- bonds in proteins.. Functionally, probable disulfide isomerase, which participates in the folding of proteins containing disulfide bonds. May act as a dithiol oxidase. Acts as a regulator of endoplasmic reticulum-mitochondria contact sites via its ability to regulate redox signals. In Danio rerio (Zebrafish), this protein is Protein disulfide-isomerase tmx3a (tmx3a).